The sequence spans 275 residues: Polyamine aminopropyltransferase (275 aa).

One can recognise a PABS domain in the interval 2–235 (DLWLREGQIE…GFWSFTIGSK (234 aa)). Residue glutamine 31 participates in S-methyl-5'-thioadenosine binding. Spermidine contacts are provided by histidine 62 and aspartate 86. Residues glutamate 106 and 137–138 (DG) each bind S-methyl-5'-thioadenosine. Aspartate 155 (proton acceptor) is an active-site residue. Residue 155 to 158 (DSTD) participates in spermidine binding.

This sequence belongs to the spermidine/spermine synthase family. As to quaternary structure, homodimer or homotetramer.

It localises to the cytoplasm. The catalysed reaction is S-adenosyl 3-(methylsulfanyl)propylamine + putrescine = S-methyl-5'-thioadenosine + spermidine + H(+). It functions in the pathway amine and polyamine biosynthesis; spermidine biosynthesis; spermidine from putrescine: step 1/1. Its function is as follows. Catalyzes the irreversible transfer of a propylamine group from the amino donor S-adenosylmethioninamine (decarboxy-AdoMet) to putrescine (1,4-diaminobutane) to yield spermidine. The polypeptide is Polyamine aminopropyltransferase (Clostridium kluyveri (strain NBRC 12016)).